A 427-amino-acid chain; its full sequence is 3-phosphoshikimate 1-carboxyvinyltransferase (427 aa).

3-phosphoshikimate is bound by residues K22, S23, and R27. K22 provides a ligand contact to phosphoenolpyruvate. Phosphoenolpyruvate-binding residues include G96 and R124. 3-phosphoshikimate contacts are provided by S169, S170, Q171, S197, D313, N336, and K340. A phosphoenolpyruvate-binding site is contributed by Q171. D313 acts as the Proton acceptor in catalysis. R344, R386, and K411 together coordinate phosphoenolpyruvate.

It belongs to the EPSP synthase family. Monomer.

It localises to the cytoplasm. It catalyses the reaction 3-phosphoshikimate + phosphoenolpyruvate = 5-O-(1-carboxyvinyl)-3-phosphoshikimate + phosphate. Its pathway is metabolic intermediate biosynthesis; chorismate biosynthesis; chorismate from D-erythrose 4-phosphate and phosphoenolpyruvate: step 6/7. Its function is as follows. Catalyzes the transfer of the enolpyruvyl moiety of phosphoenolpyruvate (PEP) to the 5-hydroxyl of shikimate-3-phosphate (S3P) to produce enolpyruvyl shikimate-3-phosphate and inorganic phosphate. This is 3-phosphoshikimate 1-carboxyvinyltransferase from Salmonella typhi.